Here is a 180-residue protein sequence, read N- to C-terminus: Acireductone dioxygenase (180 aa).

Fe(2+) contacts are provided by His97, His99, Glu103, and His141. Residues His97, His99, Glu103, and His141 each contribute to the Ni(2+) site.

The protein belongs to the acireductone dioxygenase (ARD) family. As to quaternary structure, monomer. Fe(2+) serves as cofactor. Mg(2+) is required as a cofactor. The cofactor is Ni(2+). Requires Mn(2+) as cofactor. It depends on Co(2+) as a cofactor.

It catalyses the reaction 1,2-dihydroxy-5-(methylsulfanyl)pent-1-en-3-one + O2 = 3-(methylsulfanyl)propanoate + CO + formate + 2 H(+). The enzyme catalyses 1,2-dihydroxy-5-(methylsulfanyl)pent-1-en-3-one + O2 = 4-methylsulfanyl-2-oxobutanoate + formate + 2 H(+). It functions in the pathway amino-acid biosynthesis; L-methionine biosynthesis via salvage pathway; L-methionine from S-methyl-5-thio-alpha-D-ribose 1-phosphate: step 5/6. In terms of biological role, catalyzes 2 different reactions between oxygen and the acireductone 1,2-dihydroxy-3-keto-5-methylthiopentene (DHK-MTPene) depending upon the metal bound in the active site. Fe-containing acireductone dioxygenase (Fe-ARD) produces formate and 2-keto-4-methylthiobutyrate (KMTB), the alpha-ketoacid precursor of methionine in the methionine recycle pathway. Ni-containing acireductone dioxygenase (Ni-ARD) produces methylthiopropionate, carbon monoxide and formate, and does not lie on the methionine recycle pathway. This chain is Acireductone dioxygenase (mtnD), found in Klebsiella oxytoca.